The sequence spans 430 residues: Histidine--tRNA ligase (430 aa).

It belongs to the class-II aminoacyl-tRNA synthetase family. As to quaternary structure, homodimer.

It localises to the cytoplasm. The catalysed reaction is tRNA(His) + L-histidine + ATP = L-histidyl-tRNA(His) + AMP + diphosphate + H(+). This Chlorobaculum parvum (strain DSM 263 / NCIMB 8327) (Chlorobium vibrioforme subsp. thiosulfatophilum) protein is Histidine--tRNA ligase.